The sequence spans 685 residues: Dammaradiene synthase (685 aa).

PFTB repeat units lie at residues 82–123 (MDKM…RLLN) and 265–308 (IREA…DPVV). Residue aspartate 400 is the Proton donor of the active site. PFTB repeat units follow at residues 424-465 (ITRC…KAMV) and 621-672 (IGHG…ARYR).

The protein belongs to the terpene cyclase/mutase family.

The catalysed reaction is squalene = dammara-20,24-diene. In terms of biological role, squalene cyclase producing the tetracyclic triterpene dammaradiene. This is Dammaradiene synthase (DCD) from Dryopteris crassirhizoma (Thick stemmed wood fern).